Reading from the N-terminus, the 308-residue chain is Acetylglutamate kinase (308 aa).

Substrate is bound by residues 86 to 87 (GG), arginine 108, and asparagine 201.

This sequence belongs to the acetylglutamate kinase family. ArgB subfamily.

The protein resides in the cytoplasm. It catalyses the reaction N-acetyl-L-glutamate + ATP = N-acetyl-L-glutamyl 5-phosphate + ADP. It functions in the pathway amino-acid biosynthesis; L-arginine biosynthesis; N(2)-acetyl-L-ornithine from L-glutamate: step 2/4. In terms of biological role, catalyzes the ATP-dependent phosphorylation of N-acetyl-L-glutamate. The sequence is that of Acetylglutamate kinase from Prochlorococcus marinus (strain MIT 9313).